A 310-amino-acid chain; its full sequence is uncharacterized protein (310 aa).

Positions 269-307 (DLAELERKKSLAEIHKKAAMAKKREEKKKIKQELKKSAK) form a coiled coil. Residues 290–304 (KKREEKKKIKQELKK) are compositionally biased toward basic and acidic residues. The interval 290–310 (KKREEKKKIKQELKKSAKGKK) is disordered.

This is an uncharacterized protein from Magallana gigas (Pacific oyster).